Here is a 652-residue protein sequence, read N- to C-terminus: Carboxypeptidase Z (652 aa).

A signal peptide spans 1–20; the sequence is MPTTPLLLAALAALAALAVA. An FZ domain is found at 41 to 163; it reads THSATCVDLH…APEEEGCYDP (123 aa). Cystine bridges form between Cys-46-Cys-112, Cys-54-Cys-105, Cys-96-Cys-132, Cys-121-Cys-160, and Cys-125-Cys-149. N-linked (GlcNAc...) asparagine glycosylation is present at Asn-60. In terms of domain architecture, Peptidase M14 spans 189 to 505; sequence AHHSYAQMVR…EPLLNFLEMV (317 aa). Residues His-251 and Glu-254 each coordinate Zn(2+). Asn-284 is a glycosylation site (N-linked (GlcNAc...) asparagine). Residue His-383 coordinates Zn(2+). The Proton donor/acceptor role is filled by Glu-475. The interval 594–628 is disordered; that stretch reads FLPGPSRALPRSLDPQGAPAQLDFEPPRARRQPAS.

This sequence belongs to the peptidase M14 family. It depends on Zn(2+) as a cofactor. Abundantly expressed in the placenta, with low to moderate levels in the brain, lung, thymus and kidney.

Its subcellular location is the secreted. The protein resides in the extracellular space. It localises to the extracellular matrix. With respect to regulation, inhibited by 2-mercaptomethyl-3-guanidinoethylthiopropanoic acid (MGTA) and guanidinoethylmercaptosuccinic acid (GEMSA). Inhibited by chelating agents such as EDTA and EGTA. Cleaves substrates with C-terminal arginine residues. Probably modulates the Wnt signaling pathway, by cleaving some undefined protein. May play a role in cleavage during prohormone processing. The polypeptide is Carboxypeptidase Z (Cpz) (Rattus norvegicus (Rat)).